The sequence spans 88 residues: UPF0297 protein Cphy_2298 (88 aa).

It belongs to the UPF0297 family.

This Lachnoclostridium phytofermentans (strain ATCC 700394 / DSM 18823 / ISDg) (Clostridium phytofermentans) protein is UPF0297 protein Cphy_2298.